Reading from the N-terminus, the 382-residue chain is Anhydro-N-acetylmuramic acid kinase (382 aa).

Residue 22-29 (GTSMDGVD) participates in ATP binding.

Belongs to the anhydro-N-acetylmuramic acid kinase family.

It carries out the reaction 1,6-anhydro-N-acetyl-beta-muramate + ATP + H2O = N-acetyl-D-muramate 6-phosphate + ADP + H(+). It participates in amino-sugar metabolism; 1,6-anhydro-N-acetylmuramate degradation. It functions in the pathway cell wall biogenesis; peptidoglycan recycling. Its function is as follows. Catalyzes the specific phosphorylation of 1,6-anhydro-N-acetylmuramic acid (anhMurNAc) with the simultaneous cleavage of the 1,6-anhydro ring, generating MurNAc-6-P. Is required for the utilization of anhMurNAc either imported from the medium or derived from its own cell wall murein, and thus plays a role in cell wall recycling. This chain is Anhydro-N-acetylmuramic acid kinase, found in Burkholderia orbicola (strain MC0-3).